Reading from the N-terminus, the 729-residue chain is Kinesin-like protein KAR3 (729 aa).

The disordered stretch occupies residues 1 to 48 (MESLPRTPTKGRSTQHLSTPSPKNDILAMNGHKRRNTTTPPPKHTLLK). Positions 1–109 (MESLPRTPTK…ENVNELNRTQ (109 aa)) are globular. A compositionally biased stretch (polar residues) spans 10 to 22 (KGRSTQHLSTPSP). Residues 110–357 (AILFEKKATL…LEEYIKDTEL (248 aa)) adopt a coiled-coil conformation. Residues Asn-386, Arg-388, Arg-392, Glu-454, Gly-477, Ser-478, Gly-479, Lys-480, Thr-481, Phe-482, Glu-554, Lys-579, and Thr-694 each contribute to the ATP site. In terms of domain architecture, Kinesin motor spans 386–723 (NIRVYCRIRP…LRFASKVNST (338 aa)).

Belongs to the TRAFAC class myosin-kinesin ATPase superfamily. Kinesin family. NCD subfamily. As to quaternary structure, interacts with CIK1; the interaction is direct. Interacts with VIK1; the interaction is direct.

It localises to the cytoplasm. The protein resides in the cytoskeleton. Its subcellular location is the microtubule organizing center. The protein localises to the spindle pole body. It is found in the nucleus. It localises to the chromosome. The protein resides in the spindle. The enzyme catalyses ATP + H2O = ADP + phosphate + H(+). It carries out the reaction ATP + H2O + a kinesin associated with a microtubule at position (n) = ADP + phosphate + a kinesin associated with a microtubule at position (n-1, toward the minus end).. In terms of biological role, minus end-directed microtubule (MT) motor involved in spindle midzone assembly, poleward transport of newly captured kinetochores along the lateral side of MTs, karyogamy (nuclear fusion) during mating, and with an essential function in meiosis I. Functions together with the accessory proteins CIK1 or VIK1. Drives the poleward transport of newly captured kinetochores along the lateral side of MTs, both during S-phase and during M-phase. To contribute to spindle midzone assembly during mitotic metaphase, the nuclear KAR3-CIK1 motor cross-links anti-parallel microtubules to align them on the spindle axis; as the motor travels polewards splayed microtubules are pulled into alignment. During the karyogamy (nuclear fusion) step of mating, KAR3-CIK1 cross-links antiparallel cytoplasmic microtubules emanating from the spindle pole bodies of mating partners; the motor activity of KAR3 creates the force that pulls the nuclei together by sliding cross-linked microtubules past one another. KAR3-CIK1 promotes microtubule shortening predominantly from the microtubule plus-end. Together with cytoplasmic VIK1, may act to stabilize microtubules. Requires accessory protein VIK1 for spindle pole body localization and to allow the CIN8 and KIP1 motors to generate outwardly directed spindle forces. Essential during meiosis I. The ATPase activity is stimulated by microtubule-binding. The chain is Kinesin-like protein KAR3 (KAR3) from Saccharomyces cerevisiae (strain ATCC 204508 / S288c) (Baker's yeast).